An 81-amino-acid chain; its full sequence is Large ribosomal subunit protein bL31B (81 aa).

Belongs to the bacterial ribosomal protein bL31 family. Type B subfamily. In terms of assembly, part of the 50S ribosomal subunit.

This Bacillus anthracis (strain A0248) protein is Large ribosomal subunit protein bL31B.